Consider the following 85-residue polypeptide: Exodeoxyribonuclease 7 small subunit (85 aa).

Residues 66 to 85 are disordered; the sequence is SGEGEEVPLDTPDAEDGDGE. Residues 68 to 85 show a composition bias toward acidic residues; the sequence is EGEEVPLDTPDAEDGDGE.

This sequence belongs to the XseB family. As to quaternary structure, heterooligomer composed of large and small subunits.

The protein resides in the cytoplasm. It carries out the reaction Exonucleolytic cleavage in either 5'- to 3'- or 3'- to 5'-direction to yield nucleoside 5'-phosphates.. In terms of biological role, bidirectionally degrades single-stranded DNA into large acid-insoluble oligonucleotides, which are then degraded further into small acid-soluble oligonucleotides. This is Exodeoxyribonuclease 7 small subunit from Thioalkalivibrio sulfidiphilus (strain HL-EbGR7).